Reading from the N-terminus, the 236-residue chain is Ribonuclease HIII (236 aa).

Residues leucine 9–alanine 236 enclose the RNase H type-2 domain. Aspartate 15, glutamate 16, and aspartate 122 together coordinate a divalent metal cation.

Belongs to the RNase HII family. RnhC subfamily. It depends on a divalent metal cation as a cofactor.

It localises to the cytoplasm. The catalysed reaction is Endonucleolytic cleavage to 5'-phosphomonoester.. In terms of biological role, endonuclease that specifically degrades the RNA of RNA-DNA hybrids. This is Ribonuclease HIII (rnhC) from Mycoplasma pneumoniae (strain ATCC 29342 / M129 / Subtype 1) (Mycoplasmoides pneumoniae).